We begin with the raw amino-acid sequence, 375 residues long: Growth/differentiation factor 8 (375 aa).

Residues 1 to 23 (MQKLAVYVYIYLFMQILVHPVAL) form the signal peptide. Positions 24 to 266 (DGSSQPTENA…VTDTPKRSRR (243 aa)) are excised as a propeptide. N-linked (GlcNAc...) asparagine glycosylation is present at Asn-71. Cystine bridges form between Cys-272/Cys-282, Cys-281/Cys-340, Cys-309/Cys-372, and Cys-313/Cys-374.

It belongs to the TGF-beta family. Homodimer; disulfide-linked.

The protein localises to the secreted. Functionally, acts specifically as a negative regulator of skeletal muscle growth. The protein is Growth/differentiation factor 8 (MSTN) of Meleagris gallopavo (Wild turkey).